Consider the following 234-residue polypeptide: Membrane glycoprotein RL11 (234 aa).

A signal peptide spans 1-23 (MQTYSTPLTLIIVTSLFLFTTQG). The helical transmembrane segment at 183-203 (LHCAWVSGLMIFVGALVICFL) threads the bilayer.

Its subcellular location is the host membrane. This is Membrane glycoprotein RL11 (RL11) from Human cytomegalovirus (strain Merlin) (HHV-5).